The following is a 335-amino-acid chain: Holliday junction branch migration complex subunit RuvB (335 aa).

Residues 1–181 (MERIVEVEKF…FGMHFRLQFY (181 aa)) form a large ATPase domain (RuvB-L) region. ATP contacts are provided by residues L20, R21, G62, K65, T66, T67, 128-130 (EDF), R171, Y181, and R218. T66 is a Mg(2+) binding site. Residues 182–252 (TPQELAQIIT…RTQKALEALG (71 aa)) are small ATPAse domain (RuvB-S). The interval 255-335 (ERGFDELDLK…LTPNIQNSLF (81 aa)) is head domain (RuvB-H). 2 residues coordinate DNA: R309 and R314.

Belongs to the RuvB family. In terms of assembly, homohexamer. Forms an RuvA(8)-RuvB(12)-Holliday junction (HJ) complex. HJ DNA is sandwiched between 2 RuvA tetramers; dsDNA enters through RuvA and exits via RuvB. An RuvB hexamer assembles on each DNA strand where it exits the tetramer. Each RuvB hexamer is contacted by two RuvA subunits (via domain III) on 2 adjacent RuvB subunits; this complex drives branch migration. In the full resolvosome a probable DNA-RuvA(4)-RuvB(12)-RuvC(2) complex forms which resolves the HJ.

The protein resides in the cytoplasm. The enzyme catalyses ATP + H2O = ADP + phosphate + H(+). In terms of biological role, the RuvA-RuvB-RuvC complex processes Holliday junction (HJ) DNA during genetic recombination and DNA repair, while the RuvA-RuvB complex plays an important role in the rescue of blocked DNA replication forks via replication fork reversal (RFR). RuvA specifically binds to HJ cruciform DNA, conferring on it an open structure. The RuvB hexamer acts as an ATP-dependent pump, pulling dsDNA into and through the RuvAB complex. RuvB forms 2 homohexamers on either side of HJ DNA bound by 1 or 2 RuvA tetramers; 4 subunits per hexamer contact DNA at a time. Coordinated motions by a converter formed by DNA-disengaged RuvB subunits stimulates ATP hydrolysis and nucleotide exchange. Immobilization of the converter enables RuvB to convert the ATP-contained energy into a lever motion, pulling 2 nucleotides of DNA out of the RuvA tetramer per ATP hydrolyzed, thus driving DNA branch migration. The RuvB motors rotate together with the DNA substrate, which together with the progressing nucleotide cycle form the mechanistic basis for DNA recombination by continuous HJ branch migration. Branch migration allows RuvC to scan DNA until it finds its consensus sequence, where it cleaves and resolves cruciform DNA. The chain is Holliday junction branch migration complex subunit RuvB from Nitratiruptor sp. (strain SB155-2).